Reading from the N-terminus, the 235-residue chain is Large ribosomal subunit protein uL1 (235 aa).

The interval 1 to 22 (MSKNSKAYRAAAEKVDRSNPYT) is disordered.

The protein belongs to the universal ribosomal protein uL1 family. Part of the 50S ribosomal subunit.

In terms of biological role, binds directly to 23S rRNA. The L1 stalk is quite mobile in the ribosome, and is involved in E site tRNA release. Functionally, protein L1 is also a translational repressor protein, it controls the translation of the L11 operon by binding to its mRNA. This chain is Large ribosomal subunit protein uL1, found in Mycobacterium ulcerans (strain Agy99).